A 784-amino-acid chain; its full sequence is Ribosome biogenesis protein BOP1 homolog (784 aa).

The span at 1 to 11 (MTKKLALKRRG) shows a compositional bias: basic residues. Positions 1-159 (MTKKLALKRR…DSDTSDEEDI (159 aa)) are disordered. 4 stretches are compositionally biased toward acidic residues: residues 27 to 36 (SENEEEEEDL), 45 to 54 (EDSTDDEGID), 62 to 73 (SEELQFESDEEG), and 84 to 111 (AEED…EDEE). Basic and acidic residues-rich tracts occupy residues 112–123 (KDSKSKQTDDKP) and 138–148 (LPKRDSSKPEY). A compositionally biased stretch (acidic residues) spans 149–158 (QDSDTSDEED). 7 WD repeats span residues 445–486 (GHTD…RTIE), 488–526 (DEVV…KVLV), 570–612 (THFK…SQIP), 615–653 (KSKG…LVKK), 656–695 (TNSK…KPYQ), 699–738 (LHRN…DLLQ), and 754–784 (RDEF…RLYT).

This sequence belongs to the WD repeat BOP1/ERB1 family.

It is found in the nucleus. The protein resides in the nucleolus. The protein localises to the nucleoplasm. Its function is as follows. Required for maturation of ribosomal RNAs and formation of the large ribosomal subunit. This chain is Ribosome biogenesis protein BOP1 homolog, found in Drosophila melanogaster (Fruit fly).